The primary structure comprises 780 residues: Aconitate hydratase, mitochondrial (780 aa).

A mitochondrion-targeting transit peptide spans 1–27; the sequence is MAPYSLLVTRLQKALGVRQYHVASVLC. Position 31 is an N6-succinyllysine (K31). K50 is subject to N6-acetyllysine; alternate. K50 is modified (N6-succinyllysine; alternate). Q99 contributes to the substrate binding site. K138 and K144 each carry N6-acetyllysine; alternate. N6-succinyllysine; alternate occurs at positions 138 and 144. Substrate is bound at residue 192 to 194; it reads DSH. Position 233 is an N6-acetyllysine; alternate (K233). The residue at position 233 (K233) is an N6-succinyllysine; alternate. C385 serves as a coordination point for [4Fe-4S] cluster. An N6-succinyllysine modification is found at K411. Residues C448 and C451 each contribute to the [4Fe-4S] cluster site. Substrate is bound by residues R474 and R479. 2 positions are modified to N6-acetyllysine; alternate: K517 and K523. Residues K517 and K523 each carry the N6-succinyllysine; alternate modification. Residues 524–537 show a composition bias toward basic and acidic residues; it reads LEAPDADELPRSDF. Residues 524 to 560 form a disordered region; that stretch reads LEAPDADELPRSDFDPGQDTYQHPPKDSSGQRVDVSP. K549 carries the N6-succinyllysine modification. Polar residues predominate over residues 551–560; that stretch reads SSGQRVDVSP. S559 is modified (phosphoserine). N6-acetyllysine; alternate is present on K573. N6-succinyllysine; alternate is present on K573. An N6-succinyllysine mark is found at K577 and K591. K605 bears the N6-acetyllysine; alternate mark. K605 is subject to N6-succinyllysine; alternate. A substrate-binding site is contributed by R607. The residue at position 628 (K628) is an N6-succinyllysine. Residue S670 is modified to Phosphoserine. Residue 670-671 participates in substrate binding; the sequence is SR. At K689 the chain carries N6-succinyllysine. An N6-acetyllysine; alternate mark is found at K723 and K730. N6-succinyllysine; alternate is present on residues K723 and K730. N6-acetyllysine occurs at positions 736, 739, and 743.

Belongs to the aconitase/IPM isomerase family. Monomer. It depends on [4Fe-4S] cluster as a cofactor. Post-translationally, forms covalent cross-links mediated by transglutaminase TGM2, between a glutamine and the epsilon-amino group of a lysine residue, forming homopolymers and heteropolymers.

The protein resides in the mitochondrion. The catalysed reaction is citrate = D-threo-isocitrate. It participates in carbohydrate metabolism; tricarboxylic acid cycle; isocitrate from oxaloacetate: step 2/2. In terms of biological role, catalyzes the isomerization of citrate to isocitrate via cis-aconitate. The protein is Aconitate hydratase, mitochondrial (Aco2) of Mus musculus (Mouse).